We begin with the raw amino-acid sequence, 385 residues long: Spermidine/putrescine import ATP-binding protein PotA (385 aa).

The region spanning 27–257 is the ABC transporter domain; sequence ASFRAVSKHY…PANLFVAQFA (231 aa). 59–66 contributes to the ATP binding site; it reads GPSGCGKT.

Belongs to the ABC transporter superfamily. Spermidine/putrescine importer (TC 3.A.1.11.1) family. The complex is composed of two ATP-binding proteins (PotA), two transmembrane proteins (PotB and PotC) and a solute-binding protein (PotD).

The protein resides in the cell inner membrane. The enzyme catalyses ATP + H2O + polyamine-[polyamine-binding protein]Side 1 = ADP + phosphate + polyamineSide 2 + [polyamine-binding protein]Side 1.. In terms of biological role, part of the ABC transporter complex PotABCD involved in spermidine/putrescine import. Responsible for energy coupling to the transport system. The polypeptide is Spermidine/putrescine import ATP-binding protein PotA (Methylococcus capsulatus (strain ATCC 33009 / NCIMB 11132 / Bath)).